We begin with the raw amino-acid sequence, 46 residues long: Large ribosomal subunit protein bL34c (46 aa).

The protein belongs to the bacterial ribosomal protein bL34 family.

The protein resides in the plastid. Its subcellular location is the chloroplast. The chain is Large ribosomal subunit protein bL34c from Pyropia yezoensis (Susabi-nori).